A 111-amino-acid polypeptide reads, in one-letter code: Gene 21 protein (111 aa).

The protein is Gene 21 protein (21) of Mycobacterium phage D29 (Mycobacteriophage D29).